A 217-amino-acid chain; its full sequence is Probable transaldolase (217 aa).

Catalysis depends on lysine 83, which acts as the Schiff-base intermediate with substrate.

It belongs to the transaldolase family. Type 3B subfamily.

Its subcellular location is the cytoplasm. The catalysed reaction is D-sedoheptulose 7-phosphate + D-glyceraldehyde 3-phosphate = D-erythrose 4-phosphate + beta-D-fructose 6-phosphate. It participates in carbohydrate degradation; pentose phosphate pathway; D-glyceraldehyde 3-phosphate and beta-D-fructose 6-phosphate from D-ribose 5-phosphate and D-xylulose 5-phosphate (non-oxidative stage): step 2/3. In terms of biological role, transaldolase is important for the balance of metabolites in the pentose-phosphate pathway. This is Probable transaldolase from Fervidobacterium nodosum (strain ATCC 35602 / DSM 5306 / Rt17-B1).